A 182-amino-acid chain; its full sequence is Homeobox expressed in ES cells 1-A (182 aa).

A DNA-binding region (homeobox) is located at residues 103 to 163 (YRGRRPRTAF…QNRRAKLKRS (61 aa)).

Belongs to the ANF homeobox family. In terms of tissue distribution, initially expressed in the anterior dorsal region of early embryos and later exclusively in the primordium of the anterior pituitary gland.

The protein resides in the nucleus. In terms of biological role, appears to be involved in the regional specification of the anterior head of Xenopus embryos. This chain is Homeobox expressed in ES cells 1-A (hesx1-a), found in Xenopus laevis (African clawed frog).